Consider the following 134-residue polypeptide: Terepressin/terephysin (134 aa).

Residues 1-33 (MKCSVLQMSRLSWTACVLLLPLLLLTLQGGVQG) form the signal peptide. A disulfide bond links Cys-34 and Cys-39. A propeptide spanning residues 44 to 50 (KRAVDSV) is cleaved from the precursor. Cystine bridges form between Cys-56-Cys-100, Cys-59-Cys-73, Cys-67-Cys-90, Cys-74-Cys-80, Cys-107-Cys-121, Cys-115-Cys-133, and Cys-122-Cys-127.

The protein belongs to the vasopressin/oxytocin family. Contains 7 disulfide bonds. In terms of tissue distribution, expressed by the venom duct.

It localises to the secreted. This Terebra anilis (Auger snail) protein is Terepressin/terephysin.